Here is a 479-residue protein sequence, read N- to C-terminus: Ribulose bisphosphate carboxylase large chain (479 aa).

A propeptide spanning residues 1-2 is cleaved from the precursor; that stretch reads MS. The residue at position 3 (proline 3) is an N-acetylproline. Lysine 14 carries the post-translational modification N6,N6,N6-trimethyllysine. Asparagine 123 and threonine 173 together coordinate substrate. Lysine 175 acts as the Proton acceptor in catalysis. Lysine 177 is a binding site for substrate. Mg(2+)-binding residues include lysine 201, aspartate 203, and glutamate 204. Lysine 201 is subject to N6-carboxylysine. The active-site Proton acceptor is histidine 294. Residues arginine 295, histidine 327, and serine 379 each coordinate substrate.

The protein belongs to the RuBisCO large chain family. Type I subfamily. As to quaternary structure, heterohexadecamer of 8 large chains and 8 small chains; disulfide-linked. The disulfide link is formed within the large subunit homodimers. Mg(2+) serves as cofactor. In terms of processing, the disulfide bond which can form in the large chain dimeric partners within the hexadecamer appears to be associated with oxidative stress and protein turnover.

The protein localises to the plastid. Its subcellular location is the chloroplast. The enzyme catalyses 2 (2R)-3-phosphoglycerate + 2 H(+) = D-ribulose 1,5-bisphosphate + CO2 + H2O. It catalyses the reaction D-ribulose 1,5-bisphosphate + O2 = 2-phosphoglycolate + (2R)-3-phosphoglycerate + 2 H(+). Its function is as follows. RuBisCO catalyzes two reactions: the carboxylation of D-ribulose 1,5-bisphosphate, the primary event in carbon dioxide fixation, as well as the oxidative fragmentation of the pentose substrate in the photorespiration process. Both reactions occur simultaneously and in competition at the same active site. The protein is Ribulose bisphosphate carboxylase large chain of Ananas comosus (Pineapple).